Here is a 224-residue protein sequence, read N- to C-terminus: 7-cyano-7-deazaguanine synthase (224 aa).

ATP is bound at residue 12 to 22 (LSGGLDSSTVT). Cysteine 193, cysteine 201, cysteine 204, and cysteine 207 together coordinate Zn(2+).

Belongs to the QueC family. The cofactor is Zn(2+).

It carries out the reaction 7-carboxy-7-deazaguanine + NH4(+) + ATP = 7-cyano-7-deazaguanine + ADP + phosphate + H2O + H(+). The protein operates within purine metabolism; 7-cyano-7-deazaguanine biosynthesis. In terms of biological role, catalyzes the ATP-dependent conversion of 7-carboxy-7-deazaguanine (CDG) to 7-cyano-7-deazaguanine (preQ(0)). The polypeptide is 7-cyano-7-deazaguanine synthase (Prochlorococcus marinus (strain AS9601)).